The following is a 142-amino-acid chain: Photosystem II extrinsic protein U (142 aa).

The first 28 residues, 1–28 (MKKIGLLLTIFSLCLGCLGLVPSDKAHA), serve as a signal peptide directing secretion.

Belongs to the PsbU family. As to quaternary structure, PSII is composed of 1 copy each of membrane proteins PsbA, PsbB, PsbC, PsbD, PsbE, PsbF, PsbH, PsbI, PsbJ, PsbK, PsbL, PsbM, PsbT, PsbX, PsbY, PsbZ, Psb30/Ycf12, peripheral proteins PsbO, CyanoQ (PsbQ), PsbU, PsbV and a large number of cofactors. It forms dimeric complexes.

Its subcellular location is the cellular thylakoid membrane. One of the extrinsic, lumenal subunits of photosystem II (PSII). PSII is a light-driven water plastoquinone oxidoreductase, using light energy to abstract electrons from H(2)O, generating a proton gradient subsequently used for ATP formation. The extrinsic proteins stabilize the structure of photosystem II oxygen-evolving complex (OEC), the ion environment of oxygen evolution and protect the OEC against heat-induced inactivation. The chain is Photosystem II extrinsic protein U from Trichodesmium erythraeum (strain IMS101).